The chain runs to 314 residues: UPF0761 membrane protein VP0125 (314 aa).

6 helical membrane-spanning segments follow: residues 41 to 61, 104 to 124, 139 to 159, 185 to 205, 217 to 237, and 249 to 269; these read YLAY…LSIL, MSAV…SNID, LVFS…LVGA, FLRW…YILV, VGAA…ALYI, and ALAA…IVLL. A disordered region spans residues 295 to 314; it reads ESQLANEGSESSDSANSTSQ.

This sequence belongs to the UPF0761 family.

Its subcellular location is the cell inner membrane. In Vibrio parahaemolyticus serotype O3:K6 (strain RIMD 2210633), this protein is UPF0761 membrane protein VP0125.